A 60-amino-acid chain; its full sequence is Defensin-like protein 4 (60 aa).

Cystine bridges form between Cys4/Cys56, Cys17/Cys41, Cys26/Cys51, and Cys30/Cys53.

This sequence belongs to the DEFL family. Protease inhibitor I18 (RTI/MTI-2) subfamily.

The protein resides in the secreted. In terms of biological role, inhibits trypsin and chymotrypsin. This chain is Defensin-like protein 4, found in Brassica napus (Rape).